The sequence spans 359 residues: Phosphoribosylformylglycinamidine cyclo-ligase (359 aa).

This sequence belongs to the AIR synthase family.

It is found in the cytoplasm. It carries out the reaction 2-formamido-N(1)-(5-O-phospho-beta-D-ribosyl)acetamidine + ATP = 5-amino-1-(5-phospho-beta-D-ribosyl)imidazole + ADP + phosphate + H(+). The protein operates within purine metabolism; IMP biosynthesis via de novo pathway; 5-amino-1-(5-phospho-D-ribosyl)imidazole from N(2)-formyl-N(1)-(5-phospho-D-ribosyl)glycinamide: step 2/2. The sequence is that of Phosphoribosylformylglycinamidine cyclo-ligase from Brucella canis (strain ATCC 23365 / NCTC 10854 / RM-666).